The sequence spans 893 residues: Protein bride of sevenless (893 aa).

The N-terminal stretch at 1–30 (MSGLQLIWKSPTQLVLFVLLITISCIDLCH) is a signal peptide. Residues 32–530 (VGAATPTKKS…RIKLDTWVAT (499 aa)) lie on the Extracellular side of the membrane. Disordered regions lie at residues 36 to 66 (TPTK…NEGS) and 82 to 102 (GTAS…SSTT). A compositionally biased stretch (polar residues) spans 50-66 (QPVSSTTTAIPTTNEGS). N-linked (GlcNAc...) asparagine glycans are attached at residues Asn183, Asn307, Asn328, Asn471, and Asn482. 8 helical membrane-spanning segments follow: residues 531-551 (GLTA…FIVV), 563-583 (PVTS…FVPF), 607-627 (LCGV…SLLL), 630-650 (AVML…NGYI), 653-673 (IICV…LVVM), 692-712 (WGLL…VPFI), 722-742 (GILI…WIAL), and 752-772 (AAIP…ILIP). Over 773–893 (RTFLIVRGIE…SPDHSKITRF (121 aa)) the chain is Cytoplasmic. Positions 858 to 893 (ANINPQRPPPHPQQSPSRSSVCSLPPSPDHSKITRF) are disordered.

This sequence belongs to the G-protein coupled receptor 3 family.

The protein localises to the cell membrane. Acts as a ligand for sevenless tyrosine-kinase receptor during eye development. This chain is Protein bride of sevenless (boss), found in Drosophila virilis (Fruit fly).